A 209-amino-acid chain; its full sequence is COP9 signalosome complex subunit 8 (209 aa).

Positions 8–179 (DNAFSFRKLL…GTLDVSLNRF (172 aa)) constitute a PCI domain. Phosphoserine is present on Ser-175.

The protein belongs to the CSN8 family. Component of the CSN complex, composed of COPS1/GPS1, COPS2, COPS3, COPS4, COPS5, COPS6, COPS7 (COPS7A or COPS7B), COPS8 and COPS9. In the complex, it probably interacts directly with COPS3, COPS4 and COPS7 (COPS7A or COPS7B). In terms of tissue distribution, widely expressed.

The protein resides in the cytoplasm. It is found in the nucleus. Component of the COP9 signalosome complex (CSN), a complex involved in various cellular and developmental processes. The CSN complex is an essential regulator of the ubiquitin (Ubl) conjugation pathway by mediating the deneddylation of the cullin subunits of SCF-type E3 ligase complexes, leading to decrease the Ubl ligase activity of SCF-type complexes such as SCF, CSA or DDB2. The complex is also involved in phosphorylation of p53/TP53, c-jun/JUN, IkappaBalpha/NFKBIA, ITPK1 and IRF8/ICSBP, possibly via its association with CK2 and PKD kinases. CSN-dependent phosphorylation of TP53 and JUN promotes and protects degradation by the Ubl system, respectively. This chain is COP9 signalosome complex subunit 8 (Cops8), found in Mus musculus (Mouse).